A 1092-amino-acid polypeptide reads, in one-letter code: DNA polymerase II large subunit (1092 aa).

The protein belongs to the archaeal DNA polymerase II family. In terms of assembly, heterodimer of a large subunit and a small subunit.

The catalysed reaction is DNA(n) + a 2'-deoxyribonucleoside 5'-triphosphate = DNA(n+1) + diphosphate. It carries out the reaction Exonucleolytic cleavage in the 3'- to 5'-direction to yield nucleoside 5'-phosphates.. Its function is as follows. Possesses two activities: a DNA synthesis (polymerase) and an exonucleolytic activity that degrades single-stranded DNA in the 3'- to 5'-direction. Has a template-primer preference which is characteristic of a replicative DNA polymerase. The polypeptide is DNA polymerase II large subunit (polC) (Methanothermobacter thermautotrophicus (strain ATCC 29096 / DSM 1053 / JCM 10044 / NBRC 100330 / Delta H) (Methanobacterium thermoautotrophicum)).